Here is an 84-residue protein sequence, read N- to C-terminus: ATP synthase subunit c (84 aa).

Transmembrane regions (helical) follow at residues 9–29 (IFGS…GFSL) and 54–74 (IVAG…LLFI).

It belongs to the ATPase C chain family. In terms of assembly, F-type ATPases have 2 components, F(1) - the catalytic core - and F(0) - the membrane proton channel. F(1) has five subunits: alpha(3), beta(3), gamma(1), delta(1), epsilon(1). F(0) has three main subunits: a(1), b(2) and c(10-14). The alpha and beta chains form an alternating ring which encloses part of the gamma chain. F(1) is attached to F(0) by a central stalk formed by the gamma and epsilon chains, while a peripheral stalk is formed by the delta and b chains.

Its subcellular location is the cell inner membrane. Its function is as follows. F(1)F(0) ATP synthase produces ATP from ADP in the presence of a proton or sodium gradient. F-type ATPases consist of two structural domains, F(1) containing the extramembraneous catalytic core and F(0) containing the membrane proton channel, linked together by a central stalk and a peripheral stalk. During catalysis, ATP synthesis in the catalytic domain of F(1) is coupled via a rotary mechanism of the central stalk subunits to proton translocation. Functionally, key component of the F(0) channel; it plays a direct role in translocation across the membrane. A homomeric c-ring of between 10-14 subunits forms the central stalk rotor element with the F(1) delta and epsilon subunits. This Histophilus somni (strain 129Pt) (Haemophilus somnus) protein is ATP synthase subunit c.